A 230-amino-acid polypeptide reads, in one-letter code: Isoprenyl transferase (230 aa).

Asp-14 is an active-site residue. Residue Asp-14 participates in Mg(2+) binding. Residues 15–18, Trp-19, Arg-27, His-31, and 59–61 each bind substrate; these read GNGR and STE. Asn-62 acts as the Proton acceptor in catalysis. Residues Trp-63, Arg-65, Arg-175, and 181–183 each bind substrate; that span reads RIS. Glu-194 lines the Mg(2+) pocket.

This sequence belongs to the UPP synthase family. Homodimer. Mg(2+) is required as a cofactor.

Catalyzes the condensation of isopentenyl diphosphate (IPP) with allylic pyrophosphates generating different type of terpenoids. This Fusobacterium nucleatum subsp. nucleatum (strain ATCC 25586 / DSM 15643 / BCRC 10681 / CIP 101130 / JCM 8532 / KCTC 2640 / LMG 13131 / VPI 4355) protein is Isoprenyl transferase.